A 212-amino-acid chain; its full sequence is Pyridoxine/pyridoxamine 5'-phosphate oxidase (212 aa).

Substrate contacts are provided by residues 8–11 (RREY) and lysine 66. FMN is bound by residues 61 to 66 (RIVLLK), 76 to 77 (FT), arginine 82, lysine 83, and glutamine 105. Substrate-binding residues include tyrosine 123, arginine 127, and serine 131. Residues 140 to 141 (QS) and tryptophan 185 each bind FMN. 191–193 (RLH) is a binding site for substrate. Position 195 (arginine 195) interacts with FMN.

This sequence belongs to the pyridoxamine 5'-phosphate oxidase family. Homodimer. FMN is required as a cofactor.

It carries out the reaction pyridoxamine 5'-phosphate + O2 + H2O = pyridoxal 5'-phosphate + H2O2 + NH4(+). The enzyme catalyses pyridoxine 5'-phosphate + O2 = pyridoxal 5'-phosphate + H2O2. It participates in cofactor metabolism; pyridoxal 5'-phosphate salvage; pyridoxal 5'-phosphate from pyridoxamine 5'-phosphate: step 1/1. It functions in the pathway cofactor metabolism; pyridoxal 5'-phosphate salvage; pyridoxal 5'-phosphate from pyridoxine 5'-phosphate: step 1/1. In terms of biological role, catalyzes the oxidation of either pyridoxine 5'-phosphate (PNP) or pyridoxamine 5'-phosphate (PMP) into pyridoxal 5'-phosphate (PLP). In Shewanella denitrificans (strain OS217 / ATCC BAA-1090 / DSM 15013), this protein is Pyridoxine/pyridoxamine 5'-phosphate oxidase.